The chain runs to 105 residues: Mini zinc finger protein 2 (105 aa).

The segment at 1–29 (MGPQQDRSAAKPYANGSTAAAAAAGRKEN) is disordered. Residues 35–84 (YRECQRNHAASIGGHAVDGCREFMASGADGTAAALLCAACGCHQSFHRRE) form a ZF-HD dimerization-type; degenerate zinc finger.

As to quaternary structure, homo- and heterodimers.

The protein localises to the cytoplasm. Its function is as follows. Inhibits zinc finger homeodomain (ZHD) transcription factors, by interacting with them to prevent both their nuclear localization and their DNA-binding properties. In Oryza sativa subsp. indica (Rice), this protein is Mini zinc finger protein 2 (MIF2).